A 96-amino-acid polypeptide reads, in one-letter code: Transcription and mRNA export factor SUS1 (96 aa).

The protein belongs to the ENY2 family. As to quaternary structure, component of the nuclear pore complex (NPC)-associated TREX-2 complex (transcription and export complex 2), composed of at least SUS1, SAC3, THP1, SEM1, and CDC31. TREX-2 contains 2 SUS1 chains. The TREX-2 complex interacts with the nucleoporin NUP1. Component of the 1.8 MDa SAGA transcription coactivator-HAT complex. SAGA is built of 5 distinct domains with specialized functions. Within the SAGA complex, SUS1, SGF11, SGF73 and UBP8 form an additional subcomplex of SAGA called the DUB module (deubiquitination module). Interacts directly with THP1, SAC3, SGF11, and with the RNA polymerase II.

The protein localises to the nucleus. It is found in the nucleoplasm. Its subcellular location is the cytoplasm. It localises to the P-body. Functionally, involved in mRNA export coupled transcription activation by association with both the TREX-2 and the SAGA complexes. At the promoters, SAGA is required for recruitment of the basal transcription machinery. It influences RNA polymerase II transcriptional activity through different activities such as TBP interaction and promoter selectivity, interaction with transcription activators, and chromatin modification through histone acetylation and deubiquitination. Within the SAGA complex, participates in a subcomplex required for deubiquitination of H2B and for the maintenance of steady-state H3 methylation levels. The TREX-2 complex functions in docking export-competent ribonucleoprotein particles (mRNPs) to the nuclear entrance of the nuclear pore complex (nuclear basket). TREX-2 participates in mRNA export and accurate chromatin positioning in the nucleus by tethering genes to the nuclear periphery. May also be involved in cytoplasmic mRNA decay by interaction with components of P-bodies. The chain is Transcription and mRNA export factor SUS1 from Kluyveromyces lactis (strain ATCC 8585 / CBS 2359 / DSM 70799 / NBRC 1267 / NRRL Y-1140 / WM37) (Yeast).